Consider the following 343-residue polypeptide: Plasminogen (343 aa).

Kringle domains follow at residues 1–17 (APQA…DCML) and 41–120 (AQEP…GCVA). The interval 1–140 (APQAPSVENP…LRRRSREHFC (140 aa)) is plasmin heavy chain A. 3 disulfides stabilise this stretch: C15–C94, C36–C77, and C65–C89. The 228-residue stretch at 114–341 (VVGGCVATPH…YVPWIEETMR (228 aa)) folds into the Peptidase S1 domain. Position 130 is a phosphoserine (S130). C140 and C156 are joined by a disulfide. A plasmin light chain B region spans residues 141 to 343 (GGTLISPEWV…PWIEETMRRY (203 aa)). Catalysis depends on charge relay system residues H155 and D198. Residue S221 is modified to Phosphoserine. Intrachain disulfides connect C232–C299, C262–C278, and C289–C317. S293 (charge relay system) is an active-site residue.

Belongs to the peptidase S1 family. Plasminogen subfamily. As to quaternary structure, interacts with CSPG4 and AMOT. Interacts (via the Kringle domains) with HRG; the interaction tethers PLG to the cell surface and enhances its activation. Interacts (via Kringle 4 domain) with ADA; the interaction stimulates PLG activation when in complex with DPP4. Angiostatin: Interacts with ATP5F1A; the interaction inhibits most of the angiogenic effects of angiostatin.

The protein localises to the secreted. The catalysed reaction is Preferential cleavage: Lys-|-Xaa &gt; Arg-|-Xaa, higher selectivity than trypsin. Converts fibrin into soluble products.. Its activity is regulated as follows. Converted into plasmin by plasminogen activators, both plasminogen and its activator being bound to fibrin. Cannot be activated with streptokinase. Functionally, plasmin dissolves the fibrin of blood clots and acts as a proteolytic factor in a variety of other processes including embryonic development, tissue remodeling, tumor invasion, and inflammation. In ovulation, weakens the walls of the Graafian follicle. It activates the urokinase-type plasminogen activator, collagenases and several complement zymogens, such as C1, C4 and C5. Cleavage of fibronectin and laminin leads to cell detachment and apoptosis. Also cleaves fibrin, thrombospondin and von Willebrand factor. Its role in tissue remodeling and tumor invasion may be modulated by CSPG4. Binds to cells. In Ovis aries (Sheep), this protein is Plasminogen (PLG).